An 878-amino-acid polypeptide reads, in one-letter code: MAEIDARLREEVHLLGELLGQTIRTQLGDDFLDKIERIRKGAKAGRRGSAAGAEQLTSTLGDLGDDELLPVARAFNQFLNLANIAEQQHRVRRRRPDEPEPFELRVLDELLERLLAAGQKPDELARQLGRLDIELVLTAHPTEVARRTLIQKYDAIAAQLTALDHSDLLPAERERIAQRLQRLIAEAWHTEEIRRSRPSPVDEAKWGFAVIEHSLWQAVPQFLRRADRSLQAATGLRLPLEAAPIRFASWMGGDRDGNPNVTARVTREVLLLARWMAADLYLRDVDQLAAELSMQQASAELRAQVGDSAEPYRALLKQLRERLRETRSWAQQALTADIAPGAAVLQDNHDLLAPLQLCYQSLHACGMGVIADGPLLDCLRRAATFGLFLVRLDVRQDSTRHAAALSEITDYLGLGRYAEWDEEQRLAFLQRELDSRRPLLPSDYRPSADTAEVLATCREVAAAPAAALGSYVISMAGAASDVLAVQLLLKEAGLRRPMRVVPLFETLADLDNAGPVIDRLLGLPGYRVRLHGPQEVMIGYSDSAKDAGTTAAAWAQYRAQEELVRLCGEHQVELLLFHGRGGTVGRGGGPAHAAILSQPPGSVAGRFRTTEQGEMIRFKFGLPDIAEQNLNLYLAAVLEATLLPPPAPEPSWRAMMDRLADVGVKAYRGVVREHPQFVAYFRQATPEQELGRLPLGSRPAKRREGGVESLRAIPWIFAWTQTRLMLPAWLGWEQALGQALAGGEGELLKNMREQWPFFRTRIDMLEMVLAKADASIAALYDQRLVEPALQPLGAQLRDLLSQACAAVLELTGQSRLLAHSPETLESISVRNTYLDPLHLLQAELLARCRLRQQAPESPLEQALLVSVAGIAAGLRNTG.

Active-site residues include His140 and Lys545.

This sequence belongs to the PEPCase type 1 family. Mg(2+) serves as cofactor.

The catalysed reaction is oxaloacetate + phosphate = phosphoenolpyruvate + hydrogencarbonate. In terms of biological role, forms oxaloacetate, a four-carbon dicarboxylic acid source for the tricarboxylic acid cycle. The protein is Phosphoenolpyruvate carboxylase of Ectopseudomonas mendocina (strain ymp) (Pseudomonas mendocina).